The chain runs to 308 residues: MSWLEKILEKSNIVSSRKASIPEGVWTKCTSCEQVLYYAELERNLEVCPKCDHHMRMKARRRLETFLDQGERVELGEELEPQDKLKFKDSKRYKERLAAAQKASGEKDALVVMKGAVLGVPVVACAFEFSFMGGSMGSVVGARFVRAVEAAMEHNCGLICFSASGGARMQEALMSLMQMAKTSAALERLSDKGLPFISVMTDPTMGGVSASLAMLGDINIGEPKALIGFAGRRVIEQTVREELPEGFQRSEFLLEHGAIDMIVDRRDMRQRVASLLAKMTGQASPLVVSVNDAPNEAPYAVPEANKKG.

Positions 25-294 constitute a CoA carboxyltransferase N-terminal domain; that stretch reads VWTKCTSCEQ…PLVVSVNDAP (270 aa). Zn(2+) is bound by residues Cys29, Cys32, Cys48, and Cys51. The segment at 29-51 adopts a C4-type zinc-finger fold; it reads CTSCEQVLYYAELERNLEVCPKC.

Belongs to the AccD/PCCB family. In terms of assembly, acetyl-CoA carboxylase is a heterohexamer composed of biotin carboxyl carrier protein (AccB), biotin carboxylase (AccC) and two subunits each of ACCase subunit alpha (AccA) and ACCase subunit beta (AccD). Zn(2+) serves as cofactor.

It is found in the cytoplasm. It carries out the reaction N(6)-carboxybiotinyl-L-lysyl-[protein] + acetyl-CoA = N(6)-biotinyl-L-lysyl-[protein] + malonyl-CoA. Its pathway is lipid metabolism; malonyl-CoA biosynthesis; malonyl-CoA from acetyl-CoA: step 1/1. Component of the acetyl coenzyme A carboxylase (ACC) complex. Biotin carboxylase (BC) catalyzes the carboxylation of biotin on its carrier protein (BCCP) and then the CO(2) group is transferred by the transcarboxylase to acetyl-CoA to form malonyl-CoA. This is Acetyl-coenzyme A carboxylase carboxyl transferase subunit beta from Vibrio cholerae serotype O1 (strain ATCC 39541 / Classical Ogawa 395 / O395).